We begin with the raw amino-acid sequence, 1082 residues long: RhoGEF domain-containing protein gxcI (1082 aa).

The segment covering 1-15 (MRKNSTSNPSPSHQF) has biased composition (polar residues). 5 disordered regions span residues 1-29 (MRKN…VNNN), 59-78 (DKNQ…VLPQ), 91-394 (YNEQ…VTSL), 438-488 (KQAS…SVSN), and 504-524 (INSF…SLSL). Composition is skewed to low complexity over residues 20–29 (KNTTTVVNNN), 62–71 (QQQQQQQQQQ), 96–109 (PSSS…SSSP), 116–160 (LLST…SGSP), and 170–184 (PTIL…RQLP). A compositionally biased stretch (pro residues) spans 185–206 (TRPPSPLPKLPSRPTSPVPPNP). A compositionally biased stretch (low complexity) spans 211–244 (NTTTTNNNNNNNNNNNNNNNNNNNNNNNNNNNNN). Positions 262–276 (PIPPPNDKPAPPPRP) are enriched in pro residues. Over residues 282-366 (TLTTPPTIAT…NNNNNSNNNK (85 aa)) the composition is skewed to low complexity. Positions 367 to 379 (PLPPTSTKPPRPK) are enriched in pro residues. Low complexity predominate over residues 450–473 (SSLSLSTTPTSVSPSTPSSANPTP). The DH domain maps to 622 to 817 (SFNKVIKEII…EKIVNDINGK (196 aa)). The interval 838–994 (QQLRDQTFLK…NDIDEAINIL (157 aa)) is PH-like. 2 disordered regions span residues 920–961 (NNNN…NSTP) and 1017–1060 (NNNN…NSNN).

Its function is as follows. GTPase-activating protein. The protein is RhoGEF domain-containing protein gxcI (gxcI) of Dictyostelium discoideum (Social amoeba).